We begin with the raw amino-acid sequence, 416 residues long: Catalase-peroxidase 2 (416 aa).

Residues 1–20 (MLLPLIVFLLSVLIHHRIYS) form the signal peptide.

This sequence belongs to the peroxidase family. Peroxidase/catalase subfamily. As to quaternary structure, homodimer or homotetramer. The cofactor is heme b. Formation of the three residue Trp-Tyr-Met cross-link is important for the catalase, but not the peroxidase activity of the enzyme.

It carries out the reaction H2O2 + AH2 = A + 2 H2O. It catalyses the reaction 2 H2O2 = O2 + 2 H2O. Its function is as follows. Bifunctional enzyme with both catalase and broad-spectrum peroxidase activity. The polypeptide is Catalase-peroxidase 2 (katG2) (Alkaliphilus metalliredigens (strain QYMF)).